The chain runs to 505 residues: Cytochrome P450 monooxygenase iliC (505 aa).

A helical membrane pass occupies residues 6–26; sequence LIAQHSLTLTIASSVLLVFLL. Cysteine 453 serves as a coordination point for heme.

It belongs to the cytochrome P450 family. The cofactor is heme.

It is found in the membrane. The enzyme catalyses (3E,5S)-3-[(2E,4E,8S,10E,12Z)-1-hydroxy-4,8-dimethyltetradeca-2,4,10,12-tetraen-1-ylidene]-5-[(4-hydroxyphenyl)methyl]pyrrolidine-2,4-dione + reduced [NADPH--hemoprotein reductase] + O2 = 3-[(2E,4E,8S,10E,12Z)-4,8-dimethyltetradeca-2,4,10,12-tetraenoyl]-4-hydroxy-5-(4-hydroxyphenyl)-1,2-dihydropyridin-2-one + oxidized [NADPH--hemoprotein reductase] + 2 H2O. The protein operates within mycotoxin biosynthesis. Functionally, cytochrome P450 monooxygenase; part of the gene cluster that mediates the biosynthesis of ilicicolin H, a 4-hydroxy-2-pyridonealkaloid that has potent and broad antifungal activities by inhibiting the mitochondrial respiration chain. IliC catalyzes the ring expansion of the tetramate intermediate to the acyclic 2-pyridone intermediate that contains the trans bis-diene chain. The biosynthesis of ilicicolin H starts with formation of the tetramic acid by the hybrid PKS-NRPS synthetase iliA with the partnering trans-enoyl reductase iliB since iliA lacks a designated enoylreductase (ER) domain. The cytochrome P450 monooxygenase iliC then catalyzes the ring expansion of the tetramate to the acyclic 2-pyridone. The pericyclase iliD further converts the acyclic 2-pyridone into 8-epi-ilicicolin H. 8-epi-ilicicolin H might then spontaneously convert to ilicicolin H since ilicicolin H is produced in the absence of the epimerase iliE, in contrast to what was observed for the Talaromyces variabilis ilicolin H biosynthetic pathway. In Neonectria sp. (strain DH2), this protein is Cytochrome P450 monooxygenase iliC.